Reading from the N-terminus, the 511-residue chain is 2-isopropylmalate synthase (511 aa).

Positions isoleucine 6–phenylalanine 269 constitute a Pyruvate carboxyltransferase domain. Positions 15, 203, 205, and 239 each coordinate Mn(2+). The regulatory domain stretch occupies residues valine 394–alanine 511.

The protein belongs to the alpha-IPM synthase/homocitrate synthase family. LeuA type 1 subfamily. Homodimer. Mn(2+) serves as cofactor.

It is found in the cytoplasm. It catalyses the reaction 3-methyl-2-oxobutanoate + acetyl-CoA + H2O = (2S)-2-isopropylmalate + CoA + H(+). It participates in amino-acid biosynthesis; L-leucine biosynthesis; L-leucine from 3-methyl-2-oxobutanoate: step 1/4. Catalyzes the condensation of the acetyl group of acetyl-CoA with 3-methyl-2-oxobutanoate (2-ketoisovalerate) to form 3-carboxy-3-hydroxy-4-methylpentanoate (2-isopropylmalate). The chain is 2-isopropylmalate synthase from Campylobacter jejuni (strain RM1221).